The sequence spans 78 residues: Putative defensin-like protein 133 (78 aa).

The signal sequence occupies residues 1–24 (MKRSFLLLLTILTIFIILGQGVMG). 4 cysteine pairs are disulfide-bonded: C34–C75, C44–C68, C49–C72, and C53–C74.

It belongs to the DEFL family.

Its subcellular location is the secreted. The protein is Putative defensin-like protein 133 (LCR33) of Arabidopsis thaliana (Mouse-ear cress).